Reading from the N-terminus, the 201-residue chain is 3-isopropylmalate dehydratase small subunit (201 aa).

It belongs to the LeuD family. LeuD type 1 subfamily. In terms of assembly, heterodimer of LeuC and LeuD.

It carries out the reaction (2R,3S)-3-isopropylmalate = (2S)-2-isopropylmalate. The protein operates within amino-acid biosynthesis; L-leucine biosynthesis; L-leucine from 3-methyl-2-oxobutanoate: step 2/4. Functionally, catalyzes the isomerization between 2-isopropylmalate and 3-isopropylmalate, via the formation of 2-isopropylmaleate. This is 3-isopropylmalate dehydratase small subunit from Paracoccus denitrificans (strain Pd 1222).